The primary structure comprises 504 residues: Glucose-6-phosphate isomerase (504 aa).

Glu333 (proton donor) is an active-site residue. Active-site residues include His364 and Lys473.

The protein belongs to the GPI family.

The protein localises to the cytoplasm. The enzyme catalyses alpha-D-glucose 6-phosphate = beta-D-fructose 6-phosphate. Its pathway is carbohydrate biosynthesis; gluconeogenesis. The protein operates within carbohydrate degradation; glycolysis; D-glyceraldehyde 3-phosphate and glycerone phosphate from D-glucose: step 2/4. Functionally, catalyzes the reversible isomerization of glucose-6-phosphate to fructose-6-phosphate. The protein is Glucose-6-phosphate isomerase of Stenotrophomonas maltophilia (strain K279a).